A 94-amino-acid polypeptide reads, in one-letter code: Large ribosomal subunit protein uL23 (94 aa).

The protein belongs to the universal ribosomal protein uL23 family. In terms of assembly, part of the 50S ribosomal subunit. Contacts protein L29, and trigger factor when it is bound to the ribosome.

Its function is as follows. One of the early assembly proteins it binds 23S rRNA. One of the proteins that surrounds the polypeptide exit tunnel on the outside of the ribosome. Forms the main docking site for trigger factor binding to the ribosome. The chain is Large ribosomal subunit protein uL23 from Roseiflexus sp. (strain RS-1).